The following is a 245-amino-acid chain: 1-(5-phosphoribosyl)-5-[(5-phosphoribosylamino)methylideneamino] imidazole-4-carboxamide isomerase (245 aa).

Aspartate 7 acts as the Proton acceptor in catalysis. The active-site Proton donor is aspartate 129.

The protein belongs to the HisA/HisF family.

It localises to the cytoplasm. The enzyme catalyses 1-(5-phospho-beta-D-ribosyl)-5-[(5-phospho-beta-D-ribosylamino)methylideneamino]imidazole-4-carboxamide = 5-[(5-phospho-1-deoxy-D-ribulos-1-ylimino)methylamino]-1-(5-phospho-beta-D-ribosyl)imidazole-4-carboxamide. It functions in the pathway amino-acid biosynthesis; L-histidine biosynthesis; L-histidine from 5-phospho-alpha-D-ribose 1-diphosphate: step 4/9. In Aliivibrio fischeri (strain ATCC 700601 / ES114) (Vibrio fischeri), this protein is 1-(5-phosphoribosyl)-5-[(5-phosphoribosylamino)methylideneamino] imidazole-4-carboxamide isomerase.